We begin with the raw amino-acid sequence, 747 residues long: Eukaryotic translation initiation factor 3 subunit B (747 aa).

The RRM domain occupies 42 to 128; it reads AFVVVDGLPE…HTLRVNKLTD (87 aa). WD repeat units lie at residues 195–234, 236–292, 310–349, 520–563, and 578–623; these read DRQHWTETFVQWSPLGTYLTSVHAQGVQLWGGPSWTRQRR, AHPF…PLRS, APKFPWPAFKWSADDKYVARLNPGQSISVYELPRMNLLDK, LEKK…EKPE, and ADHY…LREE.

This sequence belongs to the eIF-3 subunit B family. As to quaternary structure, component of the eukaryotic translation initiation factor 3 (eIF-3) complex.

Its subcellular location is the cytoplasm. In terms of biological role, RNA-binding component of the eukaryotic translation initiation factor 3 (eIF-3) complex, which is involved in protein synthesis of a specialized repertoire of mRNAs and, together with other initiation factors, stimulates binding of mRNA and methionyl-tRNAi to the 40S ribosome. The eIF-3 complex specifically targets and initiates translation of a subset of mRNAs involved in cell proliferation. The protein is Eukaryotic translation initiation factor 3 subunit B (prt-1) of Neurospora crassa (strain ATCC 24698 / 74-OR23-1A / CBS 708.71 / DSM 1257 / FGSC 987).